The primary structure comprises 208 residues: Proheparin-binding EGF-like growth factor (208 aa).

Residues 1–23 (MKLLPSVVLKLFLAAVFSALVTG) form the signal peptide. Positions 24–62 (ESLERLRRGLADGTSNLVSPTESTDQLLPPGGGRGREVL) are excised as a propeptide. The Extracellular portion of the chain corresponds to 24-161 (ESLERLRRGL…NRLYTYDHTT (138 aa)). Positions 37-49 (TSNLVSPTESTDQ) are enriched in polar residues. Disordered stretches follow at residues 37–57 (TSNL…GGGR) and 81–104 (QALA…LGKK). An O-linked (GalNAc...) threonine glycan is attached at threonine 85. Over residues 93–102 (KRKKKGKGLG) the composition is skewed to basic residues. The EGF-like domain maps to 104–144 (KRDPCLRKYKDFCIHGECKYVKELRAPSCICHPGYHGERCH). Disulfide bonds link cysteine 108-cysteine 121, cysteine 116-cysteine 132, and cysteine 134-cysteine 143. Positions 149–208 (PVKNRLYTYDHTTILAVVAVVLSSVCLLVIVGLLMFRYHRRGGYDVENEEKVKLGVTASH) are cleaved as a propeptide — C-terminal. Residues 162–182 (ILAVVAVVLSSVCLLVIVGLL) form a helical membrane-spanning segment. Residues 183–208 (MFRYHRRGGYDVENEEKVKLGVTASH) lie on the Cytoplasmic side of the membrane.

As to quaternary structure, interacts with FBLN1. Interacts with EGFR and ERBB4. Post-translationally, O-glycosylated. In terms of tissue distribution, macrophages, midbrain, cerebellum, hypothalamus, cerebral cortex, bulbourethral gland, lung, heart ventricle, kidney, skin, prostate, seminal vesicle, testis; at low levels in lymph node, thymus, spleen; not detected in pituitary, olfactory bulb, thyroid, duodenum, pancreas, liver, submaxillary gland.

The protein resides in the secreted. The protein localises to the extracellular space. It is found in the cell membrane. In terms of biological role, growth factor that mediates its effects via EGFR, ERBB2 and ERBB4. Required for normal cardiac valve formation and normal heart function. Promotes smooth muscle cell proliferation. May be involved in macrophage-mediated cellular proliferation. It is mitogenic for fibroblasts, but not endothelial cells. It is able to bind EGF receptor/EGFR with higher affinity than EGF itself and is a far more potent mitogen for smooth muscle cells than EGF. Also acts as a diphtheria toxin receptor. The polypeptide is Proheparin-binding EGF-like growth factor (HBEGF) (Sus scrofa (Pig)).